Here is a 118-residue protein sequence, read N- to C-terminus: Cytochrome b-c1 complex subunit 7 (118 aa).

The segment at 1–32 (MVHLTKTLRFINNPGFRKFYYGLQGYNKYGLY) is igE-binding. Immunodominant epitope; induces specific IgE antibody production in mice. Causes degranulation of rat basophilic leukemia (RBL) cells and the release of beta-hexosaminidase from them.

The protein belongs to the UQCRB/QCR7 family. In terms of assembly, component of the ubiquinol-cytochrome c oxidoreductase (cytochrome b-c1 complex, complex III, CIII), a multisubunit enzyme composed of 3 respiratory subunits cytochrome b, cytochrome c1 and Rieske protein, 2 core protein subunits, and additional low-molecular weight protein subunits. The complex exists as an obligatory dimer and forms supercomplexes (SCs) in the inner mitochondrial membrane with cytochrome c oxidase (complex IV, CIV).

It localises to the mitochondrion inner membrane. In terms of biological role, component of the ubiquinol-cytochrome c oxidoreductase, a multisubunit transmembrane complex that is part of the mitochondrial electron transport chain which drives oxidative phosphorylation. The respiratory chain contains 3 multisubunit complexes succinate dehydrogenase (complex II, CII), ubiquinol-cytochrome c oxidoreductase (cytochrome b-c1 complex, complex III, CIII) and cytochrome c oxidase (complex IV, CIV), that cooperate to transfer electrons derived from NADH and succinate to molecular oxygen, creating an electrochemical gradient over the inner membrane that drives transmembrane transport and the ATP synthase. The cytochrome b-c1 complex catalyzes electron transfer from ubiquinol to cytochrome c, linking this redox reaction to translocation of protons across the mitochondrial inner membrane, with protons being carried across the membrane as hydrogens on the quinol. In the process called Q cycle, 2 protons are consumed from the matrix, 4 protons are released into the intermembrane space and 2 electrons are passed to cytochrome c. The sequence is that of Cytochrome b-c1 complex subunit 7 from Dermatophagoides pteronyssinus (European house dust mite).